The primary structure comprises 371 residues: Glutamate 5-kinase (371 aa).

K14 contributes to the ATP binding site. Substrate-binding residues include S54, D141, and N153. Residue 173–174 (TD) coordinates ATP. The 78-residue stretch at 280–357 (AGSLIVDAGA…SDIEQLLGYI (78 aa)) folds into the PUA domain.

This sequence belongs to the glutamate 5-kinase family.

It is found in the cytoplasm. It carries out the reaction L-glutamate + ATP = L-glutamyl 5-phosphate + ADP. Its pathway is amino-acid biosynthesis; L-proline biosynthesis; L-glutamate 5-semialdehyde from L-glutamate: step 1/2. Functionally, catalyzes the transfer of a phosphate group to glutamate to form L-glutamate 5-phosphate. In Azoarcus sp. (strain BH72), this protein is Glutamate 5-kinase.